The primary structure comprises 168 residues: uncharacterized protein (168 aa).

2 helical membrane passes run 27 to 47 and 147 to 167; these read NWLV…RISG and IENG…QVMF.

It is found in the membrane. This is an uncharacterized protein from Saccharomyces cerevisiae (strain ATCC 204508 / S288c) (Baker's yeast).